The sequence spans 456 residues: MENRRQDYILRVRYHNPLPPPPFPPKLINIPNPVKQYALPNFVSTLVQEKKIPIENDIELGMPLDLAGITGFFEGDTSWMHSDLSSVNLDPIDRSLLKVAGGSGSTHLEVPFLRRTEYISSEVARAASNRGNLRLTASTSKALAEQRGRSLREVPKQLEAINESFDVVQQPLEQLKHPTKPDLKPVSAWNLLPNTSMAGIQHLMLRVADDLSERSHSYSSLVNLQEGHNLTKRHEVALFMPSSAEGEEFLSYYLPSEETAEEIQAKVNDASADVHEPFVYNHFRNFDASMHVNSTGLEDLCLTFHTDKDHPEANQVLYTPIYARSTLKRRHVRAPVSLDAVDGIELSLRDLNDEESLQLKRARYDTFGLGNIKDLEEEEEKLRSVEGSLNEELSEEEKPAESREQLESAEQTNGVKPETQAQNMSASESQANSPAPPVEEGNTQPSPVEQLQNEED.

The disordered stretch occupies residues 382–456 (LRSVEGSLNE…PVEQLQNEED (75 aa)). Ser388 is subject to Phosphoserine. The segment covering 396–406 (EEKPAESREQL) has biased composition (basic and acidic residues). 2 stretches are compositionally biased toward polar residues: residues 408–433 (SAEQTNGVKPETQAQNMSASESQANS) and 441–456 (GNTQPSPVEQLQNEED).

It belongs to the PAF1 family.

The protein localises to the cytoplasm. It is found in the nucleus. This chain is RNA polymerase II-associated protein 1 homolog, found in Schizosaccharomyces pombe (strain 972 / ATCC 24843) (Fission yeast).